Reading from the N-terminus, the 130-residue chain is Small ribosomal subunit protein uS11 (130 aa).

The protein belongs to the universal ribosomal protein uS11 family. In terms of assembly, part of the 30S ribosomal subunit. Interacts with proteins S7 and S18. Binds to IF-3.

Its function is as follows. Located on the platform of the 30S subunit, it bridges several disparate RNA helices of the 16S rRNA. Forms part of the Shine-Dalgarno cleft in the 70S ribosome. This Teredinibacter turnerae (strain ATCC 39867 / T7901) protein is Small ribosomal subunit protein uS11.